Here is a 227-residue protein sequence, read N- to C-terminus: Phosphoribosylformylglycinamidine synthase subunit PurQ (227 aa).

Positions Arg2–Arg227 constitute a Glutamine amidotransferase type-1 domain. The active-site Nucleophile is Cys85. Active-site residues include His200 and Glu202.

In terms of assembly, part of the FGAM synthase complex composed of 1 PurL, 1 PurQ and 2 PurS subunits.

It localises to the cytoplasm. It catalyses the reaction N(2)-formyl-N(1)-(5-phospho-beta-D-ribosyl)glycinamide + L-glutamine + ATP + H2O = 2-formamido-N(1)-(5-O-phospho-beta-D-ribosyl)acetamidine + L-glutamate + ADP + phosphate + H(+). The catalysed reaction is L-glutamine + H2O = L-glutamate + NH4(+). It participates in purine metabolism; IMP biosynthesis via de novo pathway; 5-amino-1-(5-phospho-D-ribosyl)imidazole from N(2)-formyl-N(1)-(5-phospho-D-ribosyl)glycinamide: step 1/2. Its function is as follows. Part of the phosphoribosylformylglycinamidine synthase complex involved in the purines biosynthetic pathway. Catalyzes the ATP-dependent conversion of formylglycinamide ribonucleotide (FGAR) and glutamine to yield formylglycinamidine ribonucleotide (FGAM) and glutamate. The FGAM synthase complex is composed of three subunits. PurQ produces an ammonia molecule by converting glutamine to glutamate. PurL transfers the ammonia molecule to FGAR to form FGAM in an ATP-dependent manner. PurS interacts with PurQ and PurL and is thought to assist in the transfer of the ammonia molecule from PurQ to PurL. The protein is Phosphoribosylformylglycinamidine synthase subunit PurQ of Thermus thermophilus (strain ATCC BAA-163 / DSM 7039 / HB27).